The sequence spans 494 residues: Glucose-6-phosphate 1-dehydrogenase (494 aa).

Positions 46 and 150 each coordinate NADP(+). Residues His180, Lys184, Glu218, and Asp237 each coordinate substrate. His242 (proton acceptor) is an active-site residue. Lys342 lines the substrate pocket.

It belongs to the glucose-6-phosphate dehydrogenase family.

It catalyses the reaction D-glucose 6-phosphate + NADP(+) = 6-phospho-D-glucono-1,5-lactone + NADPH + H(+). It participates in carbohydrate degradation; pentose phosphate pathway; D-ribulose 5-phosphate from D-glucose 6-phosphate (oxidative stage): step 1/3. In terms of biological role, catalyzes the oxidation of glucose 6-phosphate to 6-phosphogluconolactone. The sequence is that of Glucose-6-phosphate 1-dehydrogenase from Aggregatibacter actinomycetemcomitans (Actinobacillus actinomycetemcomitans).